A 220-amino-acid polypeptide reads, in one-letter code: Acetate CoA-transferase subunit alpha (220 aa).

24 to 30 (GGFMGIG) provides a ligand contact to CoA.

Belongs to the 3-oxoacid CoA-transferase subunit A family. In terms of assembly, heterotetramer composed of two alpha subunits (AtoD) and two beta subunits (AtoA).

The protein resides in the cytoplasm. It catalyses the reaction an acyl-CoA + acetate = a carboxylate + acetyl-CoA. It carries out the reaction acetoacetate + acetyl-CoA = acetoacetyl-CoA + acetate. The catalysed reaction is butanoate + acetyl-CoA = butanoyl-CoA + acetate. The enzyme catalyses acetoacetate + butanoyl-CoA = acetoacetyl-CoA + butanoate. It functions in the pathway lipid metabolism; short-chain fatty acid metabolism. Inhibited by p-chloromercuribenzoate. Its function is as follows. Coenzyme A transferase which is involved in short-chain fatty acid degradation and catalyzes the activation of short-chain fatty acids to their respective CoA thiolesters. During acetoacetate degradation, catalyzes the transfer of CoA from acetyl-CoA to acetoacetate by a mechanism involving a covalent enzyme-CoA compound as a reaction intermediate. Utilizes a variety of short chain acyl-CoA and carboxylic acid substrates but exhibits maximal activity with normal and 3-keto substrates. The chain is Acetate CoA-transferase subunit alpha from Escherichia coli (strain K12).